The sequence spans 335 residues: Phosphatidylinositol:ceramide inositolphosphotransferase (335 aa).

The Cytoplasmic segment spans residues 1 to 21 (MVLMGPHSALRLLPLKTQAIR). Residues 22–42 (FVLLLLLSVLILAVALLVTNA) traverse the membrane as a helical segment. At 43–72 (RMPDPKVVRPLPDIGFEVFPKVGWLEHLTD) the chain is on the extracellular side. The helical transmembrane segment at 73-93 (VCIFILNFLSLLVVFKLYLLH) threads the bilayer. Residues 94–98 (RQNEG) are Cytoplasmic-facing. Residues 99–119 (LDELQPFSCCPLIGKIIFGVW) traverse the membrane as a helical segment. The Extracellular portion of the chain corresponds to 120–139 (DSGRQSGIEKRDAHLIAWIR). A helical transmembrane segment spans residues 140-160 (YFTTYFIVLLFRAIVVVMTSY). Residues 161–179 (PATDNHCQNPMKITNPVKN) are Cytoplasmic-facing. The helical transmembrane segment at 180 to 200 (VIMTLVTFGSGSIHCGDLMFS) threads the bilayer. Topologically, residues 201–203 (GHT) are extracellular. Residue His202 is part of the active site. A helical transmembrane segment spans residues 204 to 224 (VSITLSLLVQWIYGSMLHWVF). At 225 to 335 (RPASVLLVLL…GPACGNFGHW (111 aa)) the chain is on the cytoplasmic side. Catalysis depends on residues His245 and Asp249.

The protein belongs to the sphingomyelin synthase family.

Its subcellular location is the membrane. In terms of biological role, bidirectional lipid inositolphosphotransferase capable of converting phosphatidylinositol (PI) and ceramide to inositol-phosphorylceramide (IPC) and diacylglycerol (DAG) and vice versa. Direction is dependent on the relative concentrations of DAG and ceramide as phosphoinositol acceptors. Essential for viability of the pathogenic bloodstream stage of this human protozoan parasite and, consequently, can be considered as potential drug target. This chain is Phosphatidylinositol:ceramide inositolphosphotransferase, found in Trypanosoma cruzi (strain CL Brener).